We begin with the raw amino-acid sequence, 273 residues long: Glucosamine-6-phosphate deaminase (273 aa).

The Proton acceptor; for enolization step role is filled by Asp-72. Asp-141 functions as the For ring-opening step in the catalytic mechanism. Residue His-143 is the Proton acceptor; for ring-opening step of the active site. The For ring-opening step role is filled by Glu-148.

This sequence belongs to the glucosamine/galactosamine-6-phosphate isomerase family. In terms of assembly, homohexamer.

The protein localises to the cytoplasm. It carries out the reaction alpha-D-glucosamine 6-phosphate + H2O = beta-D-fructose 6-phosphate + NH4(+). It functions in the pathway nucleotide-sugar biosynthesis; UDP-N-acetyl-alpha-D-glucosamine biosynthesis; alpha-D-glucosamine 6-phosphate from D-fructose 6-phosphate: step 1/1. Catalyzes the reversible conversion of alpha-D-glucosamine 6-phosphate (GlcN-6P) into beta-D-fructose 6-phosphate (Fru-6P) and ammonium ion, a regulatory reaction step in de novo uridine diphosphate-N-acetyl-alpha-D-glucosamine (UDP-GlcNAc) biosynthesis via hexosamine pathway. The sequence is that of Glucosamine-6-phosphate deaminase (Gnpda1) from Anopheles gambiae (African malaria mosquito).